The chain runs to 79 residues: D-alanyl carrier protein (79 aa).

The 77-residue stretch at 1-77 (MDTKQGVLDI…KIVAKVESLE (77 aa)) folds into the Carrier domain. Residue Ser-35 is modified to O-(pantetheine 4'-phosphoryl)serine.

Belongs to the DltC family. Post-translationally, 4'-phosphopantetheine is transferred from CoA to a specific serine of apo-DCP.

It is found in the cytoplasm. Its pathway is cell wall biogenesis; lipoteichoic acid biosynthesis. Functionally, carrier protein involved in the D-alanylation of lipoteichoic acid (LTA). The loading of thioester-linked D-alanine onto DltC is catalyzed by D-alanine--D-alanyl carrier protein ligase DltA. The DltC-carried D-alanyl group is further transferred to cell membrane phosphatidylglycerol (PG) by forming an ester bond, probably catalyzed by DltD. D-alanylation of LTA plays an important role in modulating the properties of the cell wall in Gram-positive bacteria, influencing the net charge of the cell wall. The sequence is that of D-alanyl carrier protein from Lactobacillus helveticus (strain DPC 4571).